The following is a 643-amino-acid chain: MPIITLPDGSQRQFDHPVSVLEVAQDIGAGLAKATIAGRVNGERRDACDVIEQDATLEIITAKDEDGLEIIRHSCAHLLGHAIKQLFPDVKMAIGPTIENGFYYDVDLDRSLTQEDIDAIEKRMLELAKTNYDVVKKRVTWQEARDTFEKRGEPYKMAILDENIERTATPALYHHLEYIDMCRGPHVPNMRFCQHFKLQKVAGAYWRGDSKNKMLQRIYGTAWADKKQLAEYLTRLEEAAKRDHRKIGKALDLYHMQEEAPGMVFWHNDGWTIFRELETFVRTKLKQYDYQEVKGPFMMDRVLWEKTGHWQNYADLMFTTQSENREYAIKPMNCPGHVQIFNQGLKSYRDLPIRMAEFGSCHRNEPSGSLHGLMRVRGFTQDDAHIFCTEDQIESEVTSCIKMVYDIYSTFGFTNIAVKLSTRPENRIGSDEMWDRAEAGLAAALAHNGLEYEIQEGEGAFYGPKIEFALRDCLGREWQCGTVQLDFALPGRLDATYVAEDNSRKTPVMIHRAILGSIERFIGIITEEYAGFFPAWLAPTQAVVMNITDSQSDYVQQVVKTLSDAGLRVKADLRNEKVGFKIREHTLRRVPYMLVCGDKEIAEGKVAVRTRKGADLGTFTVEEFAEILKNQVRSRELKLLNEE.

The region spanning 1–61 (MPIITLPDGS…EQDATLEIIT (61 aa)) is the TGS domain. A catalytic region spans residues 243-534 (DHRKIGKALD…ITEEYAGFFP (292 aa)). 3 residues coordinate Zn(2+): Cys334, His385, and His511.

This sequence belongs to the class-II aminoacyl-tRNA synthetase family. Homodimer. Zn(2+) is required as a cofactor.

The protein resides in the cytoplasm. It carries out the reaction tRNA(Thr) + L-threonine + ATP = L-threonyl-tRNA(Thr) + AMP + diphosphate + H(+). Its function is as follows. Catalyzes the attachment of threonine to tRNA(Thr) in a two-step reaction: L-threonine is first activated by ATP to form Thr-AMP and then transferred to the acceptor end of tRNA(Thr). Also edits incorrectly charged L-seryl-tRNA(Thr). This is Threonine--tRNA ligase from Haemophilus influenzae (strain PittEE).